Here is a 219-residue protein sequence, read N- to C-terminus: MFLTPREQEKLLISWAAEVARRRRVKGLKLNYAEAMAIIVDYILEKAREGVKMEDIIKGAQELLTENDVMEGVPELLDLVQVEATFPDGTKLVTVRNPIKSSKKTLNTYIIKQGEIEVKGEEIELEITNTGDRPIQVGSHFHFFEVNKALKFDREKAYGMRLSIPAGTAVRFEPGQTKVVRLRKIGGGRRVTGLNGLTEGSLEHNKEESIKRAKERGFA.

A urease gamma region spans residues methionine 1–serine 101. A urease beta region spans residues serine 102–alanine 219.

In the N-terminal section; belongs to the urease gamma subunit family. The protein in the C-terminal section; belongs to the urease beta subunit family. Heterohexamer of 3 UreC (alpha) and 3 UreAB (gamma/beta) subunits.

It localises to the cytoplasm. The catalysed reaction is urea + 2 H2O + H(+) = hydrogencarbonate + 2 NH4(+). It participates in nitrogen metabolism; urea degradation; CO(2) and NH(3) from urea (urease route): step 1/1. In Sulfurisphaera tokodaii (strain DSM 16993 / JCM 10545 / NBRC 100140 / 7) (Sulfolobus tokodaii), this protein is Urease subunit gamma/beta.